The chain runs to 615 residues: 9-cis-epoxycarotenoid dioxygenase NCED1, chloroplastic (615 aa).

Residues 1-41 (MPSPASNTWINTTLPSSCSSPFKDLASTSSSPTTLLPFKKR) constitute a chloroplast transit peptide. 2 disordered regions span residues 20 to 45 (SPFK…SSSN) and 62 to 101 (YQPT…KQPF). Low complexity-rich tracts occupy residues 27-37 (STSSSPTTLLP) and 64-86 (PTST…TTTT). Fe cation is bound by residues H316, H365, and H430. A coiled-coil region spans residues 571–592 (KEWKSELQIVNAQNLKLEASIK). Residue H602 coordinates Fe cation.

This sequence belongs to the carotenoid oxygenase family. Fe(2+) serves as cofactor.

The protein resides in the plastid. It localises to the chloroplast thylakoid membrane. The enzyme catalyses a 9-cis-epoxycarotenoid + O2 = a 12'-apo-carotenal + 2-cis,4-trans-xanthoxin. It catalyses the reaction 9-cis-violaxanthin + O2 = (3S,5R,6S)-5,6-epoxy-3-hydroxy-5,6-dihydro-12'-apo-beta-caroten-12'-al + 2-cis,4-trans-xanthoxin. It carries out the reaction 9'-cis-neoxanthin + O2 = (3S,5R,6R)-3,5-dihydroxy-6,7-didehydro-5,6-dihydro-12'-apo-beta-caroten-12'-al + 2-cis,4-trans-xanthoxin. Functionally, has a 11,12(11',12') 9-cis epoxycarotenoid cleavage activity. Catalyzes the first step of abscisic-acid biosynthesis from carotenoids, in response to water stress. Active on 9-cis-violaxanthin and 9'-cis-neoxanthin, but not on the all-trans isomers of violaxanthin and neoxanthin. This is 9-cis-epoxycarotenoid dioxygenase NCED1, chloroplastic (NCED1) from Phaseolus vulgaris (Kidney bean).